Here is a 140-residue protein sequence, read N- to C-terminus: Large ribosomal subunit protein uL16 (140 aa).

The span at Met-1–Arg-14 shows a compositional bias: basic residues. The segment at Met-1–Thr-22 is disordered.

Belongs to the universal ribosomal protein uL16 family. As to quaternary structure, part of the 50S ribosomal subunit.

In terms of biological role, binds 23S rRNA and is also seen to make contacts with the A and possibly P site tRNAs. This chain is Large ribosomal subunit protein uL16, found in Cyanothece sp. (strain PCC 7425 / ATCC 29141).